Here is a 141-residue protein sequence, read N- to C-terminus: Transcriptional regulator MraZ (141 aa).

2 consecutive SpoVT-AbrB domains span residues 5-47 (TFNL…KPAD) and 76-119 (ANLV…DKVQ).

The protein belongs to the MraZ family. In terms of assembly, forms oligomers.

Its subcellular location is the cytoplasm. The protein resides in the nucleoid. This chain is Transcriptional regulator MraZ, found in Mycoplasma genitalium (strain ATCC 33530 / DSM 19775 / NCTC 10195 / G37) (Mycoplasmoides genitalium).